A 328-amino-acid polypeptide reads, in one-letter code: MIEKIWSGESPLWRLLLPLSWLYGLVSGAIRLCYKLKLKRAWRAPVPVVVVGNLTAGGNGKTPVVVWLVEQLQQRGIRVGVVSRGYGGKAESYPLLLSADTTTAQAGDEPVLIYQRTDAPVAVSPVRSDAVKAILAQHPDVQIIVTDDGLQHYRLARDVEIVVIDGVRRFGNGWWLPAGPMRERAGRLKSVDAVIVNGGVPRSGEIPMHLLPGQAVNLRIGTRCDVAQLEHVVAMAGIGHPPRFFATLKMCGVQPEKCVPLADHQSLNHADVSALVSAGQTLVMTEKDAVKCRAFAEENWWYLPVDAQLSGDEPAKLLTQLTSLASGN.

55–62 (TAGGNGKT) lines the ATP pocket.

Belongs to the LpxK family.

It carries out the reaction a lipid A disaccharide + ATP = a lipid IVA + ADP + H(+). The protein operates within glycolipid biosynthesis; lipid IV(A) biosynthesis; lipid IV(A) from (3R)-3-hydroxytetradecanoyl-[acyl-carrier-protein] and UDP-N-acetyl-alpha-D-glucosamine: step 6/6. Functionally, transfers the gamma-phosphate of ATP to the 4'-position of a tetraacyldisaccharide 1-phosphate intermediate (termed DS-1-P) to form tetraacyldisaccharide 1,4'-bis-phosphate (lipid IVA). The chain is Tetraacyldisaccharide 4'-kinase from Shigella flexneri serotype 5b (strain 8401).